Consider the following 217-residue polypeptide: Ribosomal RNA large subunit methyltransferase E (217 aa).

S-adenosyl-L-methionine contacts are provided by G64, W66, D92, D108, and D133. K173 (proton acceptor) is an active-site residue.

The protein belongs to the class I-like SAM-binding methyltransferase superfamily. RNA methyltransferase RlmE family.

The protein resides in the cytoplasm. It catalyses the reaction uridine(2552) in 23S rRNA + S-adenosyl-L-methionine = 2'-O-methyluridine(2552) in 23S rRNA + S-adenosyl-L-homocysteine + H(+). In terms of biological role, specifically methylates the uridine in position 2552 of 23S rRNA at the 2'-O position of the ribose in the fully assembled 50S ribosomal subunit. The protein is Ribosomal RNA large subunit methyltransferase E of Delftia acidovorans (strain DSM 14801 / SPH-1).